The chain runs to 1343 residues: DNA-directed RNA polymerase subunit beta (1343 aa).

The protein belongs to the RNA polymerase beta chain family. As to quaternary structure, the RNAP catalytic core consists of 2 alpha, 1 beta, 1 beta' and 1 omega subunit. When a sigma factor is associated with the core the holoenzyme is formed, which can initiate transcription.

It carries out the reaction RNA(n) + a ribonucleoside 5'-triphosphate = RNA(n+1) + diphosphate. In terms of biological role, DNA-dependent RNA polymerase catalyzes the transcription of DNA into RNA using the four ribonucleoside triphosphates as substrates. The chain is DNA-directed RNA polymerase subunit beta from Shewanella violacea.